The chain runs to 288 residues: Acetyl-coenzyme A carboxylase carboxyl transferase subunit beta (288 aa).

The CoA carboxyltransferase N-terminal domain maps to 34–288 (LFAKCPACKH…HLVAFHGGGQ (255 aa)). 4 residues coordinate Zn(2+): Cys38, Cys41, Cys56, and Cys59. Residues 38 to 59 (CPACKHMIYKKDLGLAKICPTC) form a C4-type zinc finger.

This sequence belongs to the AccD/PCCB family. Acetyl-CoA carboxylase is a heterohexamer composed of biotin carboxyl carrier protein (AccB), biotin carboxylase (AccC) and two subunits each of ACCase subunit alpha (AccA) and ACCase subunit beta (AccD). The cofactor is Zn(2+).

It localises to the cytoplasm. It carries out the reaction N(6)-carboxybiotinyl-L-lysyl-[protein] + acetyl-CoA = N(6)-biotinyl-L-lysyl-[protein] + malonyl-CoA. Its pathway is lipid metabolism; malonyl-CoA biosynthesis; malonyl-CoA from acetyl-CoA: step 1/1. In terms of biological role, component of the acetyl coenzyme A carboxylase (ACC) complex. Biotin carboxylase (BC) catalyzes the carboxylation of biotin on its carrier protein (BCCP) and then the CO(2) group is transferred by the transcarboxylase to acetyl-CoA to form malonyl-CoA. The polypeptide is Acetyl-coenzyme A carboxylase carboxyl transferase subunit beta (Streptococcus pyogenes serotype M1).